Here is a 486-residue protein sequence, read N- to C-terminus: Glycogen synthase (486 aa).

K20 is an ADP-alpha-D-glucose binding site.

Belongs to the glycosyltransferase 1 family. Bacterial/plant glycogen synthase subfamily.

The catalysed reaction is [(1-&gt;4)-alpha-D-glucosyl](n) + ADP-alpha-D-glucose = [(1-&gt;4)-alpha-D-glucosyl](n+1) + ADP + H(+). It functions in the pathway glycan biosynthesis; glycogen biosynthesis. In terms of biological role, synthesizes alpha-1,4-glucan chains using ADP-glucose. The polypeptide is Glycogen synthase (Aeromonas hydrophila subsp. hydrophila (strain ATCC 7966 / DSM 30187 / BCRC 13018 / CCUG 14551 / JCM 1027 / KCTC 2358 / NCIMB 9240 / NCTC 8049)).